The primary structure comprises 735 residues: Photosystem I P700 chlorophyll a apoprotein A2 (735 aa).

Helical transmembrane passes span 47–70 (IFASHFGQLAIIFLWTSGNLFHVA), 136–159 (LFTGSVFLALVSAVFLFAGWLHLQ), 176–200 (LNHHLSGLFGVSSLAWTGHLVHVAI), 274–292 (MAHHHLAIAVIFIVAGHMY), 331–354 (LHFQLGLALASVGTITSMIAQHIY), 370–396 (AALYTHHQYIAGFIMCGAFAHGAIFFI), 418–440 (AIISHLSWVTLFLGFHTLGLYVH), and 518–536 (FLVHHAIALGLHTTTLILV). Residues Cys560 and Cys569 each contribute to the [4Fe-4S] cluster site. 2 consecutive transmembrane segments (helical) span residues 576 to 597 (AFYLAVFWMLNTIGWVTFYFHW) and 644 to 666 (LSVWAFCFLFGHLIYATGFMFLI). Positions 655, 663, and 671 each coordinate chlorophyll a. A phylloquinone-binding site is contributed by Trp672. A helical membrane pass occupies residues 708 to 728 (LVGLVHFSVGYIFTYAAFLIA).

This sequence belongs to the PsaA/PsaB family. In terms of assembly, the PsaA/B heterodimer binds the P700 chlorophyll special pair and subsequent electron acceptors. PSI consists of a core antenna complex that captures photons, and an electron transfer chain that converts photonic excitation into a charge separation. The eukaryotic PSI reaction center is composed of at least 11 subunits. Requires P700 is a chlorophyll a/chlorophyll a' dimer, A0 is one or more chlorophyll a, A1 is one or both phylloquinones and FX is a shared 4Fe-4S iron-sulfur center. as cofactor.

The protein localises to the plastid. It localises to the chloroplast thylakoid membrane. It carries out the reaction reduced [plastocyanin] + hnu + oxidized [2Fe-2S]-[ferredoxin] = oxidized [plastocyanin] + reduced [2Fe-2S]-[ferredoxin]. PsaA and PsaB bind P700, the primary electron donor of photosystem I (PSI), as well as the electron acceptors A0, A1 and FX. PSI is a plastocyanin/cytochrome c6-ferredoxin oxidoreductase, converting photonic excitation into a charge separation, which transfers an electron from the donor P700 chlorophyll pair to the spectroscopically characterized acceptors A0, A1, FX, FA and FB in turn. Oxidized P700 is reduced on the lumenal side of the thylakoid membrane by plastocyanin or cytochrome c6. The sequence is that of Photosystem I P700 chlorophyll a apoprotein A2 from Chlamydomonas moewusii (Chlamydomonas eugametos).